A 178-amino-acid chain; its full sequence is Large ribosomal subunit protein uL6 (178 aa).

The protein belongs to the universal ribosomal protein uL6 family. As to quaternary structure, part of the 50S ribosomal subunit.

Functionally, this protein binds to the 23S rRNA, and is important in its secondary structure. It is located near the subunit interface in the base of the L7/L12 stalk, and near the tRNA binding site of the peptidyltransferase center. The sequence is that of Large ribosomal subunit protein uL6 from Campylobacter concisus (strain 13826).